The sequence spans 227 residues: Ubiquitin domain-containing protein 1 (227 aa).

The interval 1 to 35 (MGNCVGRQRRERPAAPGHPRKRAGRNEPLKKERLK) is disordered. Residues 24–35 (GRNEPLKKERLK) show a composition bias toward basic and acidic residues. The Ubiquitin-like domain maps to 149 to 224 (FPLKVRLSTG…IQVIINQPPP (76 aa)).

In terms of assembly, interacts with UBTD1.

In terms of biological role, may be involved in the regulation of cellular senescence through a positive feedback loop with TP53. Is a TP53 downstream target gene that increases the stability of TP53 protein by promoting the ubiquitination and degradation of MDM2. The sequence is that of Ubiquitin domain-containing protein 1 (Ubtd1) from Rattus norvegicus (Rat).